We begin with the raw amino-acid sequence, 692 residues long: Polyphosphate kinase (692 aa).

N57 serves as a coordination point for ATP. Mg(2+)-binding residues include R383 and R413. The active-site Phosphohistidine intermediate is the H443. The ATP site is built by Y476, R572, and H600.

The protein belongs to the polyphosphate kinase 1 (PPK1) family. The cofactor is Mg(2+). Post-translationally, an intermediate of this reaction is the autophosphorylated ppk in which a phosphate is covalently linked to a histidine residue through a N-P bond.

The enzyme catalyses [phosphate](n) + ATP = [phosphate](n+1) + ADP. Functionally, catalyzes the reversible transfer of the terminal phosphate of ATP to form a long-chain polyphosphate (polyP). The chain is Polyphosphate kinase from Acinetobacter baumannii (strain AYE).